A 607-amino-acid polypeptide reads, in one-letter code: TOM1-like protein 8 (607 aa).

The region spanning 9-138 (ATSDMLIGPD…ELLRAGIVFP (130 aa)) is the VHS domain. Positions 141-175 (PQITPSSGQNGPSTRYPQNSRNARQEAIDTSTESE) are disordered. In terms of domain architecture, GAT spans 175 to 263 (EFPTLSLTEI…LLAKHEAIAS (89 aa)). Phosphoserine is present on S297. The segment covering 355–379 (NNCESSTPTSNPHANHQKVQQNYSN) has biased composition (polar residues). Disordered stretches follow at residues 355–393 (NNCE…YYGQ), 407–460 (QPSS…SPTH), and 555–582 (DNGN…NKKP). S410 carries the post-translational modification Phosphoserine. Positions 448 to 460 (QSPSSSPQYSPTH) are enriched in low complexity. Positions 555 to 569 (DNGNNNTNPYQVSSH) are enriched in polar residues.

It belongs to the TOM1 family. In terms of tissue distribution, specifically expressed in siliques and flowers.

The protein localises to the membrane. Functionally, might contribute to the loading of the ESCRT machinery. The sequence is that of TOM1-like protein 8 from Arabidopsis thaliana (Mouse-ear cress).